Reading from the N-terminus, the 372-residue chain is Histidinol-phosphate aminotransferase (372 aa).

Residue lysine 230 is modified to N6-(pyridoxal phosphate)lysine.

Belongs to the class-II pyridoxal-phosphate-dependent aminotransferase family. Histidinol-phosphate aminotransferase subfamily. In terms of assembly, homodimer. Pyridoxal 5'-phosphate serves as cofactor.

It carries out the reaction L-histidinol phosphate + 2-oxoglutarate = 3-(imidazol-4-yl)-2-oxopropyl phosphate + L-glutamate. It functions in the pathway amino-acid biosynthesis; L-histidine biosynthesis; L-histidine from 5-phospho-alpha-D-ribose 1-diphosphate: step 7/9. The chain is Histidinol-phosphate aminotransferase from Paenarthrobacter aurescens (strain TC1).